An 833-amino-acid chain; its full sequence is Leucine--tRNA ligase (833 aa).

The short motif at 41 to 52 is the 'HIGH' region element; that stretch reads PYPSGAGLHVGH. Residues 610-614 carry the 'KMSKS' region motif; sequence KMSKS. Lys613 lines the ATP pocket.

Belongs to the class-I aminoacyl-tRNA synthetase family.

It is found in the cytoplasm. It carries out the reaction tRNA(Leu) + L-leucine + ATP = L-leucyl-tRNA(Leu) + AMP + diphosphate. The chain is Leucine--tRNA ligase from Streptococcus sanguinis (strain SK36).